The following is a 479-amino-acid chain: T-box transcription factor TBX1 (479 aa).

2 stretches are compositionally biased toward low complexity: residues 15–31 (ASSLSGLGSPSPGADPF) and 59–86 (YPFAPAPGAAGSSAAESEGPGASRAAAV). The segment at 15 to 86 (ASSLSGLGSP…GPGASRAAAV (72 aa)) is disordered. Residues 108-286 (LWDEFNQLGT…SNPFAKGFRD (179 aa)) constitute a DNA-binding region (T-box). Residues 311–398 (RNPVASPTQP…APGASEPLHH (88 aa)) are disordered. The span at 313-322 (PVASPTQPNG) shows a compositional bias: polar residues. The segment covering 323–338 (SDKDAAEARREFDRDS) has biased composition (basic and acidic residues). Residues 415-426 (KSRPAPYPLPGL) carry the Nuclear localization signal motif.

As to quaternary structure, binds DNA as a dimer. Interacts with DSCR6. Interacts with NKX2-5. In terms of tissue distribution, expressed in skeletal muscle, lung and testis. Highly expressed in hair follicle stem cell, but not in terminally differentiating cells.

It is found in the nucleus. In terms of biological role, transcription factor that plays a key role in cardiovascular development by promoting pharyngeal arch segmentation during embryonic development. Also involved in craniofacial muscle development. Together with NKX2-5, acts as a regulator of asymmetric cardiac morphogenesis by promoting expression of PITX2. Acts upstream of TBX1 for the formation of the thymus and parathyroid glands from the third pharyngeal pouch. Required for hair follicle stem cell self-renewal. Binds to the palindromic T site 5'-TTCACACCTAGGTGTGAA-3' DNA sequence. In Mus musculus (Mouse), this protein is T-box transcription factor TBX1.